We begin with the raw amino-acid sequence, 464 residues long: Plant intracellular Ras-group-related LRR protein 3 (464 aa).

The stretch at 106 to 138 forms a coiled coil; sequence AAVVSLEEVHEGYEKQLRDLEEEIGRVYASAVE. LRR repeat units lie at residues 160–183, 184–206, 207–230, 232–252, 254–275, 276–299, 301–322, 323–347, 348–370, and 372–393; these read GGVVERIDLSDHELKLLPDALGKI, VGLVSLNVSRNNLRFLPDTISGL, EKLEELDLSSNRLVFLPDSIGLLL, LRILNVTGNKLTLLPESIAQC, SLVELDASFNNLTSLPANFGYG, LLNLERLSIQLNKIRFFPNSICEM, SLRYLDAHMNEIHGLPIAIGRL, TNLEVMNLSSNFSDLIELPDTISDL, ANLRELDLSNNQIRVLPDSFFRL, and KLEKLNLDQNPLEYPPQEMVNQ. The GVYW; degenerate signature appears at 398–406; that stretch reads VREFMRKRW.

This sequence belongs to the SHOC2 family. Widely expressed.

Functionally, leucine-rich repeat protein that likely mediates protein interactions, possibly in the context of signal transduction. The polypeptide is Plant intracellular Ras-group-related LRR protein 3 (PIRL3) (Arabidopsis thaliana (Mouse-ear cress)).